The primary structure comprises 3176 residues: Large tegument protein deneddylase (3176 aa).

Over residues 1-12 (MSNGDWGQSQRP) the composition is skewed to polar residues. The segment at 1-28 (MSNGDWGQSQRPRGTGPMRGIRTMDVNA) is disordered. Residues 1-268 (MSNGDWGQSQ…YEANGSGFDL (268 aa)) are deubiquitination activity. In terms of domain architecture, Peptidase C76 spans 41-258 (LGTASCNQAH…MLEHYGVYDF (218 aa)). Residues Cys-61, Asp-193, and His-195 contribute to the active site. Positions 319-342 (PAARYSPAKTNSPPPSPASAAPAS) are disordered. Tandem repeats lie at residues 335-339 (PASAA), 340-344 (PASAA), 345-349 (PASAA), 350-354 (PASAA), and 355-359 (PASAA). A 10 X 5 AA approximate repeats of P-A-S-A-A region spans residues 335-384 (PASAAPASAAPASAAPASAAPASAAQASVAPASVAPASAAPASAAPDSAA). Residues 360–364 (QASVA) form a 6; approximate repeat. The stretch at 365-369 (PASVA) is one 7; approximate repeat. Tandem repeats lie at residues 370 to 374 (PASAA) and 375 to 379 (PASAA). Residues 376 to 386 (ASAAPDSAAPA) show a composition bias toward low complexity. Disordered stretches follow at residues 376–683 (ASAA…GSGL), 928–950 (LLSG…SIYR), 1170–1193 (APIS…TPPL), 1435–1461 (LMET…RARE), 2610–3008 (GLVS…PGAR), and 3023–3043 (TYTV…KMPK). Residues 380 to 384 (PDSAA) form a 10; approximate repeat. Over residues 457 to 488 (PRPPVPPHRPPSAARLPPPVIPIPHQSPPASP) the composition is skewed to pro residues. Residues 519–546 (AAPSNPEIPLTTPSPSPTAAAAPTATTL) are compositionally biased toward low complexity. The span at 579-636 (APSPLLPQQQPPPSAAPAPSPLLPQQQPPPSAARAPSPLPPQQQPLPSATPAPPPAQQ) shows a compositional bias: pro residues. Residues 581 to 611 (SPLLPQQQPPPSAAPAPSPLLPQQQPPPSAA) form an interaction with inner tegument protein region. Positions 1170-1182 (APISPASPSATPA) are enriched in low complexity. A compositionally biased stretch (polar residues) spans 2619–2630 (SADNTPASSDRL). Over residues 2643–2654 (EGSTTAESEASG) the composition is skewed to low complexity. Residues 2738-2747 (QPAPQQPPSS) are compositionally biased toward pro residues. Composition is skewed to polar residues over residues 2761 to 2772 (SPHSTPSTASGS) and 2811 to 2831 (SAAS…SSQD). Over residues 2839–2854 (MQREKKQQGGREEAAE) the composition is skewed to basic and acidic residues. Low complexity-rich tracts occupy residues 2872-2886 (APVV…ATPA) and 2901-2912 (APALGSGLAAPA).

Belongs to the herpesviridae large tegument protein family. As to quaternary structure, interacts with host CUL1 and CUL4A; these interactions inhibit the E3 ligase activity of cullins. Interacts with inner tegument protein. Interacts with capsid vertex specific component CVC2. Interacts with the major capsid protein/MCP. Interacts with host TRIM25 and YWHAZ.

Its subcellular location is the virion tegument. The protein resides in the host cytoplasm. It is found in the host nucleus. It catalyses the reaction Thiol-dependent hydrolysis of ester, thioester, amide, peptide and isopeptide bonds formed by the C-terminal Gly of ubiquitin (a 76-residue protein attached to proteins as an intracellular targeting signal).. Its function is as follows. Large tegument protein that plays multiple roles in the viral cycle. During viral entry, remains associated with the capsid while most of the tegument is detached and participates in the capsid transport toward the host nucleus. Plays a role in the routing of the capsid at the nuclear pore complex and subsequent uncoating. Within the host nucleus, acts as a deneddylase and promotes the degradation of nuclear CRLs (cullin-RING ubiquitin ligases) and thereby stabilizes nuclear CRL substrates, while cytoplasmic CRLs remain unaffected. These modifications prevent host cell cycle S-phase progression and create a favorable environment allowing efficient viral genome replication. Participates later in the secondary envelopment of capsids. Indeed, plays a linker role for the association of the outer viral tegument to the capsids together with the inner tegument protein. Counteracts host TLR-mediated NF-kappa-B activation through both MYD88 and TICAM1-dependent pathways by interfering with 'Lys-63'- and 'Lys-48'-linked ubiquitination of signaling intermediates such as TRAF6 and IKBKG. Inhibits type I interferon production by forming a tri-molecular complex with host TRIM25 and 14-3-3 thereby promoting TRIM25 autoubiquitination and sequestration of the ligase into inactive protein aggregates. In turn, host RIGI is recruited to the complex but ubiquitination is severely impaired leading to inhibition of the pathway. Also catalyzes the removal of 'Lys-48'- and 'Lys-63'-linked ubiquitin chains on host TBK1 and STING1 suppressing cGAS-STING signaling in addition to the RIGI-MAVS pathway. Inhibits selective autophagy by deubiquitinating host SQSTM1. In turn, decreased SQSTM1 ubiquitination fails to recruit LC3 to SQSTM1-positive aggregates. In the host nucleus, deubiquitinates topoisomerase II subunits TOP2A and TOP2B thereby stabilizing SUMOylated TOP2 which halts the DNA damage response to TOP2-induced double strand DNA breaks and promotes cell survival. The polypeptide is Large tegument protein deneddylase (Homo sapiens (Human)).